The following is a 1052-amino-acid chain: Carbamoyl phosphate synthase large chain (1052 aa).

The carboxyphosphate synthetic domain stretch occupies residues 1–399 (MRENVKRVLV…ALQKAVRMLD (399 aa)). Residues R127, R167, G173, G174, K206, L208, E213, G239, V240, H241, Q282, and E296 each coordinate ATP. Residues 131–325 (RETMINVNLP…LAYVSAKLAL (195 aa)) form the ATP-grasp 1 domain. Mg(2+)-binding residues include Q282, E296, and N298. Mn(2+) is bound by residues Q282, E296, and N298. Residues 400 to 548 (LGEPGIIGGK…VTYNGTEDDI (149 aa)) form an oligomerization domain region. Residues 549–930 (EFSNGIRKLL…LKSWLSSSPN (382 aa)) form a carbamoyl phosphate synthetic domain region. Residues 674–864 (SRLLDKLGIK…IIDLALTGVI (191 aa)) enclose the ATP-grasp 2 domain. Residues R710, K749, I751, E756, G780, V781, H782, S783, Q823, and E835 each contribute to the ATP site. The Mg(2+) site is built by Q823, E835, and N837. Mn(2+) is bound by residues Q823, E835, and N837. The 123-residue stretch at 930 to 1052 (NRLPDQKGIA…YEIGEYGAGI (123 aa)) folds into the MGS-like domain. The segment at 931–1052 (RLPDQKGIAL…YEIGEYGAGI (122 aa)) is allosteric domain.

This sequence belongs to the CarB family. In terms of assembly, composed of two chains; the small (or glutamine) chain promotes the hydrolysis of glutamine to ammonia, which is used by the large (or ammonia) chain to synthesize carbamoyl phosphate. Tetramer of heterodimers (alpha,beta)4. Requires Mg(2+) as cofactor. Mn(2+) is required as a cofactor.

It catalyses the reaction hydrogencarbonate + L-glutamine + 2 ATP + H2O = carbamoyl phosphate + L-glutamate + 2 ADP + phosphate + 2 H(+). The enzyme catalyses hydrogencarbonate + NH4(+) + 2 ATP = carbamoyl phosphate + 2 ADP + phosphate + 2 H(+). Its pathway is amino-acid biosynthesis; L-arginine biosynthesis; carbamoyl phosphate from bicarbonate: step 1/1. The protein operates within pyrimidine metabolism; UMP biosynthesis via de novo pathway; (S)-dihydroorotate from bicarbonate: step 1/3. Functionally, large subunit of the glutamine-dependent carbamoyl phosphate synthetase (CPSase). CPSase catalyzes the formation of carbamoyl phosphate from the ammonia moiety of glutamine, carbonate, and phosphate donated by ATP, constituting the first step of 2 biosynthetic pathways, one leading to arginine and/or urea and the other to pyrimidine nucleotides. The large subunit (synthetase) binds the substrates ammonia (free or transferred from glutamine from the small subunit), hydrogencarbonate and ATP and carries out an ATP-coupled ligase reaction, activating hydrogencarbonate by forming carboxy phosphate which reacts with ammonia to form carbamoyl phosphate. The protein is Carbamoyl phosphate synthase large chain of Sulfolobus acidocaldarius (strain ATCC 33909 / DSM 639 / JCM 8929 / NBRC 15157 / NCIMB 11770).